The chain runs to 827 residues: Zinc finger protein 438 (827 aa).

Disordered stretches follow at residues 1 to 31 (MQNS…LQNK), 117 to 173 (LKLP…LYKP), and 193 to 232 (ALTN…AKQD). 2 stretches are compositionally biased toward polar residues: residues 16 to 31 (NIPS…LQNK) and 150 to 159 (PAQTQMCPQM). Residues 217 to 226 (PATPASPTPE) show a composition bias toward pro residues. C2H2-type zinc fingers lie at residues 506–528 (HRCH…MNTH), 534–556 (YSCR…MKLH), and 566–589 (MCCE…KEVH). The tract at residues 682–723 (FPGSKGTQEELVQHASHDWKRHPERGKPEKVHSSSEESHACP) is disordered. Composition is skewed to basic and acidic residues over residues 688–699 (TQEELVQHASHD) and 706–721 (RGKP…ESHA). The C2H2-type 4 zinc-finger motif lies at 775 to 798 (FNCLLCAEMLGQKEDLLHHWKHQH).

The protein localises to the nucleus. Acts as a transcriptional repressor. The sequence is that of Zinc finger protein 438 (ZNF438) from Pongo abelii (Sumatran orangutan).